The following is a 135-amino-acid chain: Sex-regulated protein janus-A (135 aa).

Residue Lys-37 coordinates substrate. The Proton acceptor role is filled by His-63. Residue 104–106 (SQG) participates in substrate binding.

The protein belongs to the janus family.

Its function is as follows. JanA and janB regulate somatic sex differentiation. In Drosophila mauritiana (Fruit fly), this protein is Sex-regulated protein janus-A (janA).